Consider the following 480-residue polypeptide: Glutamate--tRNA ligase 2 (480 aa).

The 'HIGH' region signature appears at 15-25 (PSPTGYLHVGG). The 'KMSKS' region signature appears at 248 to 252 (RLSKR). Residue Lys251 participates in ATP binding.

The protein belongs to the class-I aminoacyl-tRNA synthetase family. Glutamate--tRNA ligase type 1 subfamily. As to quaternary structure, monomer.

The protein localises to the cytoplasm. It carries out the reaction tRNA(Glu) + L-glutamate + ATP = L-glutamyl-tRNA(Glu) + AMP + diphosphate. Functionally, catalyzes the attachment of glutamate to tRNA(Glu) in a two-step reaction: glutamate is first activated by ATP to form Glu-AMP and then transferred to the acceptor end of tRNA(Glu). This chain is Glutamate--tRNA ligase 2, found in Koribacter versatilis (strain Ellin345).